A 372-amino-acid polypeptide reads, in one-letter code: Y-box-binding protein 3 (372 aa).

The tract at residues 1-82 is disordered; that stretch reads MSEAGEATTT…LATAAGSEDA (82 aa). N-acetylserine is present on Ser2. Phosphoserine is present on Ser2. The span at 7–28 shows a compositional bias: low complexity; sequence ATTTTTTTLPQAPTEAAAAAPQ. Ser34 carries the post-translational modification Phosphoserine. Positions 35 to 79 are enriched in low complexity; it reads PVGSGAPQAAAPAPAAHVAGNPGGDAAPAATGTAAAASLATAAGS. The CSD domain maps to 93-157; it reads GTVKWFNVRN…GEKGAEAANV (65 aa). A phosphoserine mark is found at Ser134, Ser201, Ser203, and Ser204. A disordered region spans residues 181 to 372; the sequence is YYGRRRGPPR…APPTQQSSAE (192 aa). The span at 222–238 shows a compositional bias: basic residues; sequence QLRRPQYRPQYRQRRFP. Position 251 is an omega-N-methylarginine (Arg251). Residues 314 to 324 show a composition bias toward polar residues; the sequence is QQATSGPNQPS. At Ser324 the chain carries Phosphoserine. Arg326 carries the omega-N-methylarginine modification. Residues 327-340 are compositionally biased toward basic residues; sequence RGYRRPYNYRRRPR. Residues Ser346, Ser369, and Ser370 each carry the phosphoserine modification.

Found in a mRNP complex with YBX2. Interacts with RRP1B. In terms of tissue distribution, highly expressed in skeletal muscle and heart.

The protein localises to the cytoplasm. It is found in the nucleus. Binds to the GM-CSF promoter. Seems to act as a repressor. Also binds to full-length mRNA and to short RNA sequences containing the consensus site 5'-UCCAUCA-3'. May have a role in translation repression. The chain is Y-box-binding protein 3 (YBX3) from Homo sapiens (Human).